Reading from the N-terminus, the 398-residue chain is Secreted aspartic protease 3 (398 aa).

Positions 1–18 are cleaved as a signal peptide; that stretch reads MFLKNIFIALAIALLADA. Residues 19-58 constitute a propeptide, activation peptide; that stretch reads TPTTFNNSPGFVALNFDVIKTHKNVTGPQGEINTNVNVKR. A glycan (N-linked (GlcNAc...) asparagine) is linked at asparagine 42. One can recognise a Peptidase A1 domain in the interval 72 to 384; the sequence is YASDITVGSN…DLDDNEISLA (313 aa). The active site involves aspartate 90. 90–92 is a pepstatin A binding site; sequence DTG. Positions 103–112 are enriched in polar residues; the sequence is VSCQAGQGQD. Residues 103–139 form a disordered region; the sequence is VSCQAGQGQDPNFCKNEGTYSPSSSSSSQNLNSPFSI. The cysteines at positions 105 and 116 are disulfide-linked. Low complexity predominate over residues 123–138; the sequence is SPSSSSSSQNLNSPFS. 140-143 contributes to the pepstatin A binding site; sequence EYGD. 4 residues coordinate Zn(2+): histidine 188, aspartate 248, histidine 254, and aspartate 270. Residue aspartate 274 is part of the active site. 274-278 lines the pepstatin A pocket; sequence DSGTT. A disulfide bridge links cysteine 312 with cysteine 350. Asparagine 313 carries N-linked (GlcNAc...) asparagine glycosylation.

The protein belongs to the peptidase A1 family. In terms of assembly, monomer.

The protein resides in the secreted. The catalysed reaction is Preferential cleavage at the carboxyl of hydrophobic amino acids, but fails to cleave 15-Leu-|-Tyr-16, 16-Tyr-|-Leu-17 and 24-Phe-|-Phe-25 of insulin B chain. Activates trypsinogen, and degrades keratin.. Inhibited by pepstatin A analogs. In terms of biological role, secreted aspartic peptidases (SAPs) are a group of ten acidic hydrolases considered as key virulence factors. These enzymes supply the fungus with nutrient amino acids as well as are able to degrade the selected host's proteins involved in the immune defense. Induces host inflammatory cytokine production in a proteolytic activity-independent way. Moreover, acts toward human hemoglobin though limited proteolysis to generate a variety of antimicrobial hemocidins, enabling to compete with the other microorganisms of the same physiological niche using the microbicidal peptides generated from the host protein. Plays a key role in defense against host by cleaving histatin-5 (Hst 5), a peptide from human saliva that carries out fungicidal activity. The cleavage rate decreases in an order of SAP2 &gt; SAP9 &gt; SAP3 &gt; SAP7 &gt; SAP4 &gt; SAP1 &gt; SAP8. The first cleavage occurs between residues 'Lys-17' and 'His-18' of Hst 5, giving DSHAKRHHGYKRKFHEK and HHSHRGY peptides. Simultaneously, the DSHAKRHHGYKRK peptide is also formed. Further fragmentation by SAP3 results in DSHAKRHHGY and KRKFHEK products. The polypeptide is Secreted aspartic protease 3 (Candida albicans (strain SC5314 / ATCC MYA-2876) (Yeast)).